We begin with the raw amino-acid sequence, 61 residues long: UPF0434 protein PA14_25520 (61 aa).

It belongs to the UPF0434 family.

The sequence is that of UPF0434 protein PA14_25520 from Pseudomonas aeruginosa (strain UCBPP-PA14).